The following is a 381-amino-acid chain: Lipid-A-disaccharide synthase (381 aa).

This sequence belongs to the LpxB family.

The enzyme catalyses a lipid X + a UDP-2-N,3-O-bis[(3R)-3-hydroxyacyl]-alpha-D-glucosamine = a lipid A disaccharide + UDP + H(+). Its pathway is bacterial outer membrane biogenesis; LPS lipid A biosynthesis. Its function is as follows. Condensation of UDP-2,3-diacylglucosamine and 2,3-diacylglucosamine-1-phosphate to form lipid A disaccharide, a precursor of lipid A, a phosphorylated glycolipid that anchors the lipopolysaccharide to the outer membrane of the cell. This is Lipid-A-disaccharide synthase from Solibacter usitatus (strain Ellin6076).